A 155-amino-acid chain; its full sequence is Endoribonuclease YbeY (155 aa).

3 residues coordinate Zn(2+): H114, H118, and H124.

This sequence belongs to the endoribonuclease YbeY family. Zn(2+) serves as cofactor.

The protein resides in the cytoplasm. In terms of biological role, single strand-specific metallo-endoribonuclease involved in late-stage 70S ribosome quality control and in maturation of the 3' terminus of the 16S rRNA. The polypeptide is Endoribonuclease YbeY (Escherichia coli O81 (strain ED1a)).